The chain runs to 116 residues: NADPH-dependent 7-cyano-7-deazaguanine reductase (116 aa).

Residue C31 is the Thioimide intermediate of the active site. The Proton donor role is filled by D38. Substrate contacts are provided by residues 53 to 55 (IEL) and 72 to 73 (YE).

This sequence belongs to the GTP cyclohydrolase I family. QueF type 1 subfamily.

The protein resides in the cytoplasm. The enzyme catalyses 7-aminomethyl-7-carbaguanine + 2 NADP(+) = 7-cyano-7-deazaguanine + 2 NADPH + 3 H(+). The protein operates within tRNA modification; tRNA-queuosine biosynthesis. In terms of biological role, catalyzes the NADPH-dependent reduction of 7-cyano-7-deazaguanine (preQ0) to 7-aminomethyl-7-deazaguanine (preQ1). This is NADPH-dependent 7-cyano-7-deazaguanine reductase from Pelodictyon phaeoclathratiforme (strain DSM 5477 / BU-1).